We begin with the raw amino-acid sequence, 397 residues long: Enoyl-[acyl-carrier-protein] reductase [NADH] (397 aa).

Residues 48–53 (GASTGY), 74–75 (FE), 111–112 (DA), and 139–140 (VA) contribute to the NAD(+) site. A substrate-binding site is contributed by tyrosine 225. The Proton donor role is filled by tyrosine 235. Residues lysine 244 and 273–275 (VVT) each bind NAD(+).

Belongs to the TER reductase family. In terms of assembly, monomer.

The enzyme catalyses a 2,3-saturated acyl-[ACP] + NAD(+) = a (2E)-enoyl-[ACP] + NADH + H(+). It functions in the pathway lipid metabolism; fatty acid biosynthesis. Its function is as follows. Involved in the final reduction of the elongation cycle of fatty acid synthesis (FAS II). Catalyzes the reduction of a carbon-carbon double bond in an enoyl moiety that is covalently linked to an acyl carrier protein (ACP). The sequence is that of Enoyl-[acyl-carrier-protein] reductase [NADH] from Burkholderia mallei (strain SAVP1).